A 335-amino-acid chain; its full sequence is tRNA methyltransferase 10 homolog A (335 aa).

Disordered stretches follow at residues 1–91 (MSSE…DRKR) and 279–335 (VPAH…PDPQ). Residues Ser-22 and Ser-24 each carry the phosphoserine modification. The span at 52–62 (RLWEEQREQRK) shows a compositional bias: basic and acidic residues. Residues 52-84 (RLWEEQREQRKEKRKEKRKRKKLERRCQLESNS) adopt a coiled-coil conformation. Basic residues predominate over residues 63–75 (EKRKEKRKRKKLE). The SAM-dependent MTase TRM10-type domain occupies 88–279 (DRKRIRRHVA…TILPPRKGAV (192 aa)). The segment covering 304–319 (EGEHGRDDPGSPHKEQ) has biased composition (basic and acidic residues). Low complexity predominate over residues 320–335 (QGQQSSSVSAVSPDPQ). Residue Ser-331 is modified to Phosphoserine.

Belongs to the class IV-like SAM-binding methyltransferase superfamily. TRM10 family. Interacts with tRNA. As to expression, ubiquitously expressed. Is more abundant in brain and pancreatic islets compared to other tissues (at protein level).

The protein localises to the nucleus. Its subcellular location is the nucleolus. It carries out the reaction guanosine(9) in tRNA + S-adenosyl-L-methionine = N(1)-methylguanosine(9) in tRNA + S-adenosyl-L-homocysteine + H(+). Its function is as follows. S-adenosyl-L-methionine-dependent guanine N(1)-methyltransferase that catalyzes the formation of N(1)-methylguanine at position 9 (m1G9) in tRNAs. Probably not able to catalyze formation of N(1)-methyladenine at position 9 (m1A9) in tRNAs. This Rattus norvegicus (Rat) protein is tRNA methyltransferase 10 homolog A (Trmt10a).